A 946-amino-acid polypeptide reads, in one-letter code: Bifunctional glutamine synthetase adenylyltransferase/adenylyl-removing enzyme (946 aa).

An adenylyl removase region spans residues 1–440; it reads MKPLSSPLQQ…VFNELIGDDE (440 aa). Positions 449-946 are adenylyl transferase; that stretch reads SEQWRELWQD…ASWQKWLVEE (498 aa).

The protein belongs to the GlnE family. Mg(2+) serves as cofactor.

The catalysed reaction is [glutamine synthetase]-O(4)-(5'-adenylyl)-L-tyrosine + phosphate = [glutamine synthetase]-L-tyrosine + ADP. The enzyme catalyses [glutamine synthetase]-L-tyrosine + ATP = [glutamine synthetase]-O(4)-(5'-adenylyl)-L-tyrosine + diphosphate. In terms of biological role, involved in the regulation of glutamine synthetase GlnA, a key enzyme in the process to assimilate ammonia. When cellular nitrogen levels are high, the C-terminal adenylyl transferase (AT) inactivates GlnA by covalent transfer of an adenylyl group from ATP to specific tyrosine residue of GlnA, thus reducing its activity. Conversely, when nitrogen levels are low, the N-terminal adenylyl removase (AR) activates GlnA by removing the adenylyl group by phosphorolysis, increasing its activity. The regulatory region of GlnE binds the signal transduction protein PII (GlnB) which indicates the nitrogen status of the cell. This is Bifunctional glutamine synthetase adenylyltransferase/adenylyl-removing enzyme from Escherichia coli O127:H6 (strain E2348/69 / EPEC).